The sequence spans 192 residues: NADH:FMN oxidoreductase (192 aa).

The segment at 1-20 (MSDKPNAVSSHTTPDVPEVA) is disordered. FMN is bound by residues 60-63 (TATS), 77-84 (NIAETSSS), Ala-111, and Arg-117.

It belongs to the non-flavoprotein flavin reductase family.

It localises to the cytoplasm. It catalyses the reaction FMNH2 + NAD(+) = FMN + NADH + 2 H(+). It participates in sulfur metabolism; dibenzothiophene degradation. In terms of biological role, an NADH:FMN oxidoreductase which supplies reduced FMN for the '4S' desulfurization pathway that removes covalently bound sulfur from dibenzothiophene (DBT) without breaking carbon-carbon bonds. Provides DszA and DszC (DBTO2-monooxygenase and DBT-monooxygenase respectively) with reduced flavin (FMN). The protein is NADH:FMN oxidoreductase of Rhodococcus erythropolis (Arthrobacter picolinophilus).